The chain runs to 182 residues: Putative manganese efflux pump MntP (182 aa).

A run of 6 helical transmembrane segments spans residues 6 to 26 (LIPLIIMAFALGMDAFSVSLG), 37 to 57 (ILYIGMTIGIFHIIMPFIGMV), 71 to 91 (HFAGAILLIGLGFYIVYSTIL), 101 to 121 (IGISLFVFAFGVSIDSFSVGL), 131 to 151 (IITILLFGFVSMLLAWIGLLI), and 162 to 182 (YGEIVGGIILVGFGLYILFPI).

The protein belongs to the MntP (TC 9.B.29) family.

The protein localises to the cell membrane. Probably functions as a manganese efflux pump. The protein is Putative manganese efflux pump MntP of Bacillus cereus (strain G9842).